The chain runs to 169 residues: Probable phospholipid hydroperoxide glutathione peroxidase (169 aa).

The active site involves Cys43.

It belongs to the glutathione peroxidase family. In terms of assembly, monomer. Has a tendency to form higher mass oligomers. Interacts with FUNDC1; this interaction promotes GPX4 recruitment into mitochondria through TOM/TIM complex where it is degraded by mitophagy.

It localises to the cytoplasm. The enzyme catalyses a hydroperoxy polyunsaturated fatty acid + 2 glutathione = a hydroxy polyunsaturated fatty acid + glutathione disulfide + H2O. In terms of biological role, protects cells and enzymes from oxidative damage, by catalyzing the reduction of hydrogen peroxide, lipid peroxides and organic hydroperoxide, by glutathione. The protein is Probable phospholipid hydroperoxide glutathione peroxidase (GPXle-1) of Solanum lycopersicum (Tomato).